The primary structure comprises 587 residues: 5-aminolevulinate synthase, erythroid-specific, mitochondrial (587 aa).

The N-terminal 49 residues, 1–49 (MVAAAMLLRSCPVLSKGPTGLLGKVAKTYQFLFGIGRCPILATQGPTCS), are a transit peptide targeting the mitochondrion. Residue Arg-163 coordinates succinyl-CoA. The pyridoxal 5'-phosphate site is built by Cys-258 and Phe-259. 2 residues coordinate succinyl-CoA: Ser-280 and Lys-299. Pyridoxal 5'-phosphate contacts are provided by Ser-332, His-360, and Thr-388. Lys-391 is a catalytic residue. An N6-(pyridoxal phosphate)lysine modification is found at Lys-391. Pyridoxal 5'-phosphate contacts are provided by Thr-420 and Thr-421. Succinyl-CoA is bound at residue Thr-508.

Belongs to the class-II pyridoxal-phosphate-dependent aminotransferase family. In terms of assembly, homodimer. Interacts with SUCLA2. The cofactor is pyridoxal 5'-phosphate. As to expression, erythroid-specific.

It is found in the mitochondrion inner membrane. The catalysed reaction is succinyl-CoA + glycine + H(+) = 5-aminolevulinate + CO2 + CoA. The protein operates within porphyrin-containing compound metabolism; protoporphyrin-IX biosynthesis; 5-aminolevulinate from glycine: step 1/1. In terms of biological role, catalyzes the pyridoxal 5'-phosphate (PLP)-dependent condensation of succinyl-CoA and glycine to form aminolevulinic acid (ALA), with CoA and CO2 as by-products. Contributes significantly to heme formation during erythropoiesis. The polypeptide is 5-aminolevulinate synthase, erythroid-specific, mitochondrial (Alas2) (Rattus norvegicus (Rat)).